We begin with the raw amino-acid sequence, 255 residues long: Hydroxyacylglutathione hydrolase (255 aa).

Zn(2+) is bound by residues His53, His55, Asp57, His58, His110, Asp127, and His165.

It belongs to the metallo-beta-lactamase superfamily. Glyoxalase II family. As to quaternary structure, monomer. The cofactor is Zn(2+).

It catalyses the reaction an S-(2-hydroxyacyl)glutathione + H2O = a 2-hydroxy carboxylate + glutathione + H(+). It functions in the pathway secondary metabolite metabolism; methylglyoxal degradation; (R)-lactate from methylglyoxal: step 2/2. Functionally, thiolesterase that catalyzes the hydrolysis of S-D-lactoyl-glutathione to form glutathione and D-lactic acid. This Xanthomonas euvesicatoria pv. vesicatoria (strain 85-10) (Xanthomonas campestris pv. vesicatoria) protein is Hydroxyacylglutathione hydrolase.